We begin with the raw amino-acid sequence, 510 residues long: Protein disulfide-isomerase (510 aa).

Positions M1 to A19 are cleaved as a signal peptide. The Thioredoxin 1 domain occupies D20–G136. Active-site nucleophile residues include C55 and C58. Residues C55 and C58 are joined by a disulfide bond. The residue at position 202 (K202) is an N6-acetyllysine. K224 and K273 each carry N6-succinyllysine. Residues S333 and S359 each carry the phosphoserine modification. The Thioredoxin 2 domain maps to G351–Q477. Active-site nucleophile residues include C399 and C402. C399 and C402 are disulfide-bonded. S429 is subject to Phosphoserine. Positions E473 to L510 are disordered. Positions A480–D502 are enriched in acidic residues. A Prevents secretion from ER motif is present at residues K507–L510.

The protein belongs to the protein disulfide isomerase family. Heterodimer; heterodimerizes with the protein microsomal triglyceride transfer MTTP. Homodimer. Homodimer. Monomers and homotetramers may also occur. Interacts with P4HA2, forming a heterotetramer consisting of 2 alpha subunits (P4HA2) and 2 beta (P4HB), where P4HB plays the role of a structural subunit; this tetramer catalyzes the formation of 4-hydroxyproline in collagen. Also constitutes the structural subunit of the microsomal triacylglycerol transfer protein MTTP in mammalian cells. Stabilizes both enzymes and retain them in the ER without contributing to the catalytic activity. Binds UBQLN1. Interacts with ERO1B. Interacts with ILDR2. Interacts with ERN1/IRE1A (via N-terminus); the interaction is enhanced by phosphorylation of P4HB by FAM20C in response to endoplasmic reticulum stress and results in attenuation of ERN1 activity. In terms of processing, phosphorylation of Ser-359 by FAM20C is induced by endoplasmic reticulum stress and results in a functional switch from oxidoreductase to molecular chaperone. It also promotes interaction with ERN1.

The protein resides in the endoplasmic reticulum. It localises to the endoplasmic reticulum lumen. Its subcellular location is the melanosome. It is found in the cell membrane. It catalyses the reaction Catalyzes the rearrangement of -S-S- bonds in proteins.. Functionally, this multifunctional protein catalyzes the formation, breakage and rearrangement of disulfide bonds. At the cell surface, seems to act as a reductase that cleaves disulfide bonds of proteins attached to the cell. May therefore cause structural modifications of exofacial proteins. Inside the cell, seems to form/rearrange disulfide bonds of nascent proteins. At high concentrations and following phosphorylation by FAM20C, functions as a chaperone that inhibits aggregation of misfolded proteins. At low concentrations, facilitates aggregation (anti-chaperone activity). May be involved with other chaperones in the structural modification of the TG precursor in hormone biogenesis. Also acts as a structural subunit of various enzymes such as prolyl 4-hydroxylase and microsomal triacylglycerol transfer protein MTTP. Receptor for LGALS9; the interaction retains P4HB at the cell surface of Th2 T helper cells, increasing disulfide reductase activity at the plasma membrane, altering the plasma membrane redox state and enhancing cell migration. The chain is Protein disulfide-isomerase (P4HB) from Macaca fuscata fuscata (Japanese macaque).